The primary structure comprises 354 residues: Photosystem II protein D1 3 (354 aa).

The next 3 membrane-spanning stretches (helical) occupy residues 29 to 46 (YIGW…TATT), 118 to 133 (HFLI…EWEL), and 142 to 156 (WIAV…AATA). His-118 contacts chlorophyll a. Tyr-126 is a binding site for pheophytin a. [CaMn4O5] cluster is bound by residues Asp-170 and Glu-189. Residues 197–218 (FHQLGVAGVFGGALFSAMHGSL) form a helical membrane-spanning segment. Chlorophyll a is bound at residue His-198. A quinone-binding positions include His-215 and 264-265 (SF). His-215 is a binding site for Fe cation. His-272 serves as a coordination point for Fe cation. The helical transmembrane segment at 274 to 288 (FLAAWPVIGIWFTAL) threads the bilayer. [CaMn4O5] cluster is bound by residues His-332, Glu-333, Asp-342, and Ala-344. A propeptide spanning residues 345-354 (AVEVAPAVRG) is cleaved from the precursor.

This sequence belongs to the reaction center PufL/M/PsbA/D family. PSII is composed of 1 copy each of membrane proteins PsbA, PsbB, PsbC, PsbD, PsbE, PsbF, PsbH, PsbI, PsbJ, PsbK, PsbL, PsbM, PsbT, PsbX, PsbY, PsbZ, Psb30/Ycf12, peripheral proteins PsbO, CyanoQ (PsbQ), PsbU, PsbV and a large number of cofactors. It forms dimeric complexes. It depends on The D1/D2 heterodimer binds P680, chlorophylls that are the primary electron donor of PSII, and subsequent electron acceptors. It shares a non-heme iron and each subunit binds pheophytin, quinone, additional chlorophylls, carotenoids and lipids. D1 provides most of the ligands for the Mn4-Ca-O5 cluster of the oxygen-evolving complex (OEC). There is also a Cl(-1) ion associated with D1 and D2, which is required for oxygen evolution. The PSII complex binds additional chlorophylls, carotenoids and specific lipids. as a cofactor. In terms of processing, tyr-161 forms a radical intermediate that is referred to as redox-active TyrZ, YZ or Y-Z. Post-translationally, C-terminally processed by CtpA; processing is essential to allow assembly of the oxygen-evolving complex and thus photosynthetic growth.

The protein localises to the cellular thylakoid membrane. The catalysed reaction is 2 a plastoquinone + 4 hnu + 2 H2O = 2 a plastoquinol + O2. Functionally, photosystem II (PSII) is a light-driven water:plastoquinone oxidoreductase that uses light energy to abstract electrons from H(2)O, generating O(2) and a proton gradient subsequently used for ATP formation. It consists of a core antenna complex that captures photons, and an electron transfer chain that converts photonic excitation into a charge separation. The D1/D2 (PsbA/PsbD) reaction center heterodimer binds P680, the primary electron donor of PSII as well as several subsequent electron acceptors. The protein is Photosystem II protein D1 3 of Synechococcus sp. (strain JA-3-3Ab) (Cyanobacteria bacterium Yellowstone A-Prime).